The primary structure comprises 182 residues: Adenine phosphoribosyltransferase (182 aa).

The protein belongs to the purine/pyrimidine phosphoribosyltransferase family. In terms of assembly, homodimer.

The protein localises to the cytoplasm. It carries out the reaction AMP + diphosphate = 5-phospho-alpha-D-ribose 1-diphosphate + adenine. It participates in purine metabolism; AMP biosynthesis via salvage pathway; AMP from adenine: step 1/1. Functionally, catalyzes a salvage reaction resulting in the formation of AMP, that is energically less costly than de novo synthesis. The chain is Adenine phosphoribosyltransferase from Campylobacter concisus (strain 13826).